We begin with the raw amino-acid sequence, 375 residues long: Patatin-1-Kuras 2 (375 aa).

The first 11 residues, 1–11, serve as a signal peptide directing secretion; that stretch reads MILATTSSTFA. A PNPLA domain is found at 20–218; sequence LSIDGGGIKG…TVADPALLSV (199 aa). Residues 24–29 carry the GXGXXG motif; it reads GGGIKG. The short motif at 63 to 67 is the GXSXG element; sequence GTSTG. Ser-65 serves as the catalytic Nucleophile. Residue Asn-103 is glycosylated (N-linked (GlcNAc...) asparagine). Residue Asp-204 is the Proton acceptor of the active site. The DGA/G motif lies at 204–206; the sequence is DGA. Positions 349–373 form a coiled coil; that stretch reads ETYEEALKRFAKLLSDRKKLRANKA.

The protein belongs to the patatin family. In terms of tissue distribution, tuber.

Its subcellular location is the vacuole. Functionally, probable lipolytic acyl hydrolase (LAH), an activity which is thought to be involved in the response of tubers to pathogens. This is Patatin-1-Kuras 2 (pat1-k2) from Solanum tuberosum (Potato).